We begin with the raw amino-acid sequence, 640 residues long: Chaperone protein HtpG (640 aa).

The segment at Met1–Arg348 is a; substrate-binding. The segment at Glu349 to Arg565 is b. Residues Met566–Lys640 are c.

Belongs to the heat shock protein 90 family. Homodimer.

The protein localises to the cytoplasm. Its function is as follows. Molecular chaperone. Has ATPase activity. In Treponema denticola (strain ATCC 35405 / DSM 14222 / CIP 103919 / JCM 8153 / KCTC 15104), this protein is Chaperone protein HtpG.